The primary structure comprises 943 residues: Zinc finger BED domain-containing protein 39 (943 aa).

The interval 1–99 (MSSVSSDIDG…DIAMDVSGST (99 aa)) is disordered. Residues 12 to 21 (PETKRFRIDV) show a composition bias toward basic and acidic residues. Low complexity predominate over residues 50-72 (SPAAPSSASYRSSNSSVISSSES). Over residues 73–85 (PIKDEDVDVHDGQ) the composition is skewed to basic and acidic residues. A BED-type; degenerate zinc finger spans residues 184-235 (NKQTPVWKYFVYNKTENLSRCIVGDCTYMLKGPHTSTLACHLKKHTREYSEF). Disordered regions lie at residues 242–315 (YSRT…KEPS) and 328–348 (RQATNNSNGSPPTTPHAPQLP). The span at 262–276 (TLQTQNTPRQTGSPA) shows a compositional bias: polar residues. Residues 277–292 (STCNTNSNTSSSVSSG) are compositionally biased toward low complexity. The span at 328–338 (RQATNNSNGSP) shows a compositional bias: polar residues.

Expressed in distal tip cells and in germline cells.

Its subcellular location is the nucleus. The protein resides in the cytoplasm. In terms of biological role, regulates the timing and orientation of distal tip cell migration during gonadal development. May act in parallel to cacn-1 and Rac GTPases to control the anterior and posterior migration of distal tip cells. This is Zinc finger BED domain-containing protein 39 from Caenorhabditis elegans.